Here is a 373-residue protein sequence, read N- to C-terminus: Spermidine/putrescine import ATP-binding protein PotA (373 aa).

The region spanning 11–241 is the ABC transporter domain; the sequence is IELRSLKKSY…PSNLFVAKFI (231 aa). Residue 43–50 participates in ATP binding; it reads GPSGCGKT.

The protein belongs to the ABC transporter superfamily. Spermidine/putrescine importer (TC 3.A.1.11.1) family. The complex is composed of two ATP-binding proteins (PotA), two transmembrane proteins (PotB and PotC) and a solute-binding protein (PotD).

The protein resides in the cell inner membrane. It catalyses the reaction ATP + H2O + polyamine-[polyamine-binding protein]Side 1 = ADP + phosphate + polyamineSide 2 + [polyamine-binding protein]Side 1.. Functionally, part of the ABC transporter complex PotABCD involved in spermidine/putrescine import. Responsible for energy coupling to the transport system. This chain is Spermidine/putrescine import ATP-binding protein PotA, found in Mannheimia succiniciproducens (strain KCTC 0769BP / MBEL55E).